The primary structure comprises 366 residues: Chorismate synthase (366 aa).

Arginine 48 and arginine 54 together coordinate NADP(+). FMN contacts are provided by residues 125-127 (RSS), 238-239 (NA), glycine 278, 293-297 (KPTSS), and arginine 319.

It belongs to the chorismate synthase family. In terms of assembly, homotetramer. The cofactor is FMNH2.

The enzyme catalyses 5-O-(1-carboxyvinyl)-3-phosphoshikimate = chorismate + phosphate. It participates in metabolic intermediate biosynthesis; chorismate biosynthesis; chorismate from D-erythrose 4-phosphate and phosphoenolpyruvate: step 7/7. Catalyzes the anti-1,4-elimination of the C-3 phosphate and the C-6 proR hydrogen from 5-enolpyruvylshikimate-3-phosphate (EPSP) to yield chorismate, which is the branch point compound that serves as the starting substrate for the three terminal pathways of aromatic amino acid biosynthesis. This reaction introduces a second double bond into the aromatic ring system. This Chromobacterium violaceum (strain ATCC 12472 / DSM 30191 / JCM 1249 / CCUG 213 / NBRC 12614 / NCIMB 9131 / NCTC 9757 / MK) protein is Chorismate synthase.